The following is a 71-amino-acid chain: Large ribosomal subunit protein bL31 (71 aa).

Cys-16, Cys-18, Cys-36, and Cys-39 together coordinate Zn(2+).

The protein belongs to the bacterial ribosomal protein bL31 family. Type A subfamily. Part of the 50S ribosomal subunit. Requires Zn(2+) as cofactor.

In terms of biological role, binds the 23S rRNA. This is Large ribosomal subunit protein bL31 from Petrotoga mobilis (strain DSM 10674 / SJ95).